The following is a 146-amino-acid chain: Hemoglobin subunit beta (146 aa).

The Globin domain maps to 2 to 146 (QWSDSERTII…VVMFLGKQYH (145 aa)). Histidine 63 and histidine 92 together coordinate heme b.

Belongs to the globin family. In terms of assembly, heterotetramer of two alpha chains and two beta chains. In terms of tissue distribution, red blood cells.

Involved in oxygen transport from the lung to the various peripheral tissues. The chain is Hemoglobin subunit beta (hbb) from Artedidraco orianae (Barbeled plunderfish).